Consider the following 300-residue polypeptide: Protoheme IX farnesyltransferase (300 aa).

Helical transmembrane passes span isoleucine 20–glycine 40, tryptophan 49–tyrosine 69, valine 97–isoleucine 117, alanine 122–valine 142, leucine 145–alanine 165, leucine 176–tyrosine 196, alanine 217–glycine 237, leucine 242–tyrosine 262, and leucine 278–phenylalanine 298.

Belongs to the UbiA prenyltransferase family. Protoheme IX farnesyltransferase subfamily.

The protein resides in the cell inner membrane. The enzyme catalyses heme b + (2E,6E)-farnesyl diphosphate + H2O = Fe(II)-heme o + diphosphate. It functions in the pathway porphyrin-containing compound metabolism; heme O biosynthesis; heme O from protoheme: step 1/1. Functionally, converts heme B (protoheme IX) to heme O by substitution of the vinyl group on carbon 2 of heme B porphyrin ring with a hydroxyethyl farnesyl side group. This Flavobacterium johnsoniae (strain ATCC 17061 / DSM 2064 / JCM 8514 / BCRC 14874 / CCUG 350202 / NBRC 14942 / NCIMB 11054 / UW101) (Cytophaga johnsonae) protein is Protoheme IX farnesyltransferase.